We begin with the raw amino-acid sequence, 364 residues long: tRNA-specific 2-thiouridylase MnmA 2 (364 aa).

ATP-binding positions include 10–17 (GMSGGVDS) and Met36. Cys106 serves as the catalytic Nucleophile. Cys106 and Cys204 are disulfide-bonded. Gly130 contributes to the ATP binding site. The tract at residues 154-156 (KDQ) is interaction with tRNA. Catalysis depends on Cys204, which acts as the Cysteine persulfide intermediate. The interval 310–311 (RY) is interaction with tRNA.

Belongs to the MnmA/TRMU family.

Its subcellular location is the cytoplasm. The enzyme catalyses S-sulfanyl-L-cysteinyl-[protein] + uridine(34) in tRNA + AH2 + ATP = 2-thiouridine(34) in tRNA + L-cysteinyl-[protein] + A + AMP + diphosphate + H(+). In terms of biological role, catalyzes the 2-thiolation of uridine at the wobble position (U34) of tRNA, leading to the formation of s(2)U34. The sequence is that of tRNA-specific 2-thiouridylase MnmA 2 from Thermoanaerobacter pseudethanolicus (strain ATCC 33223 / 39E) (Clostridium thermohydrosulfuricum).